Here is a 165-residue protein sequence, read N- to C-terminus: Selenoprotein F (165 aa).

The first 31 residues, 1 to 31 (MVAMAAGPSGCLVPAFGLRLLLATVLQAVSA), serve as a signal peptide directing secretion. Residue Sec-96 is a non-standard amino acid, selenocysteine.

Forms a tight complex with UGGT1/UGCGL1. Interacts with UGGT2/UGCGL2. Interacts with RDH11. The N-terminus is blocked. As to expression, higher levels in prostate and thyroid gland.

Its subcellular location is the endoplasmic reticulum lumen. In terms of biological role, may be involved in redox reactions associated with the formation of disulfide bonds. May contribute to the quality control of protein folding in the endoplasmic reticulum. May regulate protein folding by enhancing the catalytic activity of UGGT1/UGCGL1 and UGGT2/UGCGL2. This chain is Selenoprotein F, found in Homo sapiens (Human).